The following is a 284-amino-acid chain: L-ribulose-5-phosphate 3-epimerase UlaE (284 aa).

This sequence belongs to the L-ribulose-5-phosphate 3-epimerase family.

The enzyme catalyses L-ribulose 5-phosphate = L-xylulose 5-phosphate. It functions in the pathway cofactor degradation; L-ascorbate degradation; D-xylulose 5-phosphate from L-ascorbate: step 3/4. In terms of biological role, catalyzes the isomerization of L-xylulose-5-phosphate to L-ribulose-5-phosphate. Is involved in the anaerobic L-ascorbate utilization. This chain is L-ribulose-5-phosphate 3-epimerase UlaE, found in Escherichia coli O8 (strain IAI1).